Consider the following 684-residue polypeptide: Kinesin-like protein KIN-13B (684 aa).

Disordered regions lie at residues 1–31 and 71–103; these read MSGRQRSVAAAVHHQRQLSDNPLDMSSSNGR and GNEFFGEPTTPQYGARPTNQRKNNDESEFSPGL. 2 stretches are compositionally biased toward polar residues: residues 18–31 and 79–91; these read LSDNPLDMSSSNGR and TTPQYGARPTNQR. Residues 169–492 enclose the Kinesin motor domain; sequence KIKVVVRKRP…LRYADRVKSL (324 aa). Position 258–265 (258–265) interacts with ATP; the sequence is GQTGSGKT. Residues 574 to 594 form a disordered region; the sequence is KPTIQMKSRDMPRPDMKKSNS. Residues 580 to 594 are compositionally biased toward basic and acidic residues; it reads KSRDMPRPDMKKSNS. Residues 596–626 adopt a coiled-coil conformation; it reads DNLNALLQEEEDLVNAHRKQVEDTMNIVKEE.

It belongs to the TRAFAC class myosin-kinesin ATPase superfamily. Kinesin family. KIN-13 subfamily.

Acts redundantly with KIN13A to modulate cell wall synthesis and cell expansion via the THE1 pathway. This chain is Kinesin-like protein KIN-13B, found in Arabidopsis thaliana (Mouse-ear cress).